A 290-amino-acid polypeptide reads, in one-letter code: Short chain dehydrogenase/reductase nsrO (290 aa).

Positions 37 and 149 each coordinate NADP(+). Active-site proton donor residues include Ser-168 and Tyr-182. Residues Tyr-182, Lys-186, and Thr-221 each coordinate NADP(+). Residue Lys-186 is the Lowers pKa of active site Tyr of the active site.

It belongs to the short-chain dehydrogenases/reductases (SDR) family.

It functions in the pathway secondary metabolite biosynthesis. Functionally, short chain dehydrogenase/reductase; part of the gene cluster that mediates the biosynthesis of the tetrahydroxanthone dimer neosartorin, which exhibits antibacterial activity. The two different monomeric units appear to be synthesized by the same set of enzymes, among which the Baeyer-Villiger monooxygenase nsrF is the key enzyme for the divergence of the biosynthetic routes. The pathway begins with the synthesis of atrochrysone thioester by the polyketide synthase nsrB. The atrochrysone carboxyl ACP thioesterase nsrC then breaks the thioester bond and releases the atrochrysone carboxylic acid from AacuL. Atrochrysone carboxylic acid is decarboxylated by the decarboxylase nsrE, and oxidized by the anthrone oxygenase nsrD to yield emodin. Emodin is then reduced to emodin hydroquinone by the oxidoreductase nsrR. A-ring reduction by the short chain dehydrogenase nsrJ, dehydration by the scytalone dehydratase-like protein nsrI and probable spontaneous re-oxidation, results in overall deoxygenation to chrysophanol. The Baeyer-Villiger monooxygenase nsrF accepts chrysophanol as a substrate to insert one oxygen atom at two different positions to yield the precursors of both monomric units. NsrF is promiscuous/flexible in interacting with the 2 (non methylated and methylated) aromatic rings of chrysophanol, thus diverging the biosynthetic pathway at this point. After the hydrolysis of the lactones, methylesterification by the methyltransferase nsrG yields respectively moniliphenone and 2,2',6'-trihydroxy-4-methyl-6-methoxya-cyldiphenylmethanone. The next steps are the hydroxylation by the FAD-dependent monooxygenase nsrK, followed by isomerization by the monooxygenase nsrQ. The short chain dehydrogenase/reductase nsrO then catalyzes the C-5 ketoreduction to give the xanthone skeleton of blennolide C and 5-acetylblennolide A. The acetyltransferase nsrL has a strict substrate specificity and uses only blennolide A but not blennolide C to yield 5-acetylblennolide A as the single-acetylated product. In the final step of the biosynthesis, the heterodimerization of the 2 xanthones, blennolide C and 5-acetylblennolide A, is catalyzed by the cytochrome P450 monooxygenase nsrP. NsrP can utilize at least three different xanthones as its substrates to perform the dimerization reaction. The sequence is that of Short chain dehydrogenase/reductase nsrO from Aspergillus novofumigatus (strain IBT 16806).